The chain runs to 234 residues: uncharacterized protein (234 aa).

The segment at 1-23 (MVDQIRSPSWKSGFPSHQHQQGS) is disordered.

This is an uncharacterized protein from Caenorhabditis elegans.